The chain runs to 126 residues: Histone H2B type 1-K (126 aa).

Positions 1 to 12 (MPEPAKSAPAPK) are enriched in low complexity. Residues 1–36 (MPEPAKSAPAPKKGSKKAVTKAQKKDGKKRKRSRKE) are disordered. N-acetylproline is present on Pro-2. An ADP-ribosyl glutamic acid modification is found at Glu-3. Residue Lys-6 is modified to N6-(2-hydroxyisobutyryl)lysine; alternate. Lys-6 carries the post-translational modification N6-(beta-hydroxybutyryl)lysine; alternate. Lys-6 is modified (N6-acetyllysine; alternate). Residue Lys-6 is modified to N6-butyryllysine; alternate. Residue Lys-6 is modified to N6-crotonyllysine; alternate. Lys-6 is subject to N6-lactoyllysine; alternate. Residue Lys-6 forms a Glycyl lysine isopeptide (Lys-Gly) (interchain with G-Cter in SUMO2); alternate linkage. An ADP-ribosylserine modification is found at Ser-7. Lys-12 carries the N6-(beta-hydroxybutyryl)lysine; alternate modification. 2 positions are modified to N6-acetyllysine; alternate: Lys-12 and Lys-13. N6-crotonyllysine; alternate occurs at positions 12 and 13. Position 12 is an N6-lactoyllysine; alternate (Lys-12). Lys-13 carries the post-translational modification N6-(2-hydroxyisobutyryl)lysine; alternate. Ser-15 bears the Phosphoserine; by STK4/MST1 mark. 4 positions are modified to N6-acetyllysine; alternate: Lys-16, Lys-17, Lys-21, and Lys-24. N6-crotonyllysine; alternate is present on residues Lys-16, Lys-17, Lys-21, and Lys-24. An N6-lactoyllysine; alternate mark is found at Lys-16, Lys-17, Lys-21, and Lys-24. Lys-17 is subject to N6-glutaryllysine; alternate. Lys-21 and Lys-24 each carry N6-(2-hydroxyisobutyryl)lysine; alternate. Lys-21 bears the N6-(beta-hydroxybutyryl)lysine; alternate mark. Lys-21 is modified (N6-butyryllysine; alternate). A Glycyl lysine isopeptide (Lys-Gly) (interchain with G-Cter in SUMO2); alternate cross-link involves residue Lys-21. At Lys-25 the chain carries N6-(2-hydroxyisobutyryl)lysine. At Lys-35 the chain carries N6-(2-hydroxyisobutyryl)lysine; alternate. Residue Lys-35 is modified to N6-(beta-hydroxybutyryl)lysine; alternate. At Lys-35 the chain carries N6-crotonyllysine; alternate. Lys-35 is subject to N6-glutaryllysine; alternate. Lys-35 bears the N6-succinyllysine; alternate mark. A Glycyl lysine isopeptide (Lys-Gly) (interchain with G-Cter in ubiquitin); alternate cross-link involves residue Lys-35. Glu-36 carries the post-translational modification PolyADP-ribosyl glutamic acid. Residue Ser-37 is modified to Phosphoserine; by AMPK. An N6-(2-hydroxyisobutyryl)lysine; alternate mark is found at Lys-44, Lys-47, and Lys-58. Lys-44 is subject to N6-lactoyllysine; alternate. Residues Lys-44 and Lys-47 each carry the N6-glutaryllysine; alternate modification. The residue at position 47 (Lys-47) is an N6-methyllysine; alternate. The residue at position 58 (Lys-58) is an N6,N6-dimethyllysine; alternate. Arg-80 bears the Dimethylated arginine mark. The residue at position 86 (Lys-86) is an N6-(2-hydroxyisobutyryl)lysine; alternate. An N6-acetyllysine; alternate modification is found at Lys-86. N6-lactoyllysine; alternate is present on Lys-86. Lys-86 bears the N6,N6,N6-trimethyllysine; alternate mark. Omega-N-methylarginine is present on residues Arg-87 and Arg-93. The residue at position 109 (Lys-109) is an N6-(2-hydroxyisobutyryl)lysine; alternate. N6-lactoyllysine; alternate is present on Lys-109. Lys-109 carries the post-translational modification N6-glutaryllysine; alternate. Lys-109 is modified (N6-methyllysine; alternate). A glycan (O-linked (GlcNAc) serine) is linked at Ser-113. Position 116 is a phosphothreonine (Thr-116). 2 positions are modified to N6-(2-hydroxyisobutyryl)lysine; alternate: Lys-117 and Lys-121. Lys-117 is modified (N6-(beta-hydroxybutyryl)lysine; alternate). An N6-lactoyllysine; alternate mark is found at Lys-117 and Lys-121. 2 positions are modified to N6-glutaryllysine; alternate: Lys-117 and Lys-121. N6-succinyllysine; alternate occurs at positions 117 and 121. Lys-117 carries the post-translational modification N6-methylated lysine; alternate. Lys-121 is covalently cross-linked (Glycyl lysine isopeptide (Lys-Gly) (interchain with G-Cter in ubiquitin); alternate).

Belongs to the histone H2B family. The nucleosome is a histone octamer containing two molecules each of H2A, H2B, H3 and H4 assembled in one H3-H4 heterotetramer and two H2A-H2B heterodimers. The octamer wraps approximately 147 bp of DNA. In terms of processing, monoubiquitination at Lys-35 (H2BK34Ub) by the MSL1/MSL2 dimer is required for histone H3 'Lys-4' (H3K4me) and 'Lys-79' (H3K79me) methylation and transcription activation at specific gene loci, such as HOXA9 and MEIS1 loci. Similarly, monoubiquitination at Lys-121 (H2BK120Ub) by the RNF20/40 complex gives a specific tag for epigenetic transcriptional activation and is also prerequisite for histone H3 'Lys-4' and 'Lys-79' methylation. It also functions cooperatively with the FACT dimer to stimulate elongation by RNA polymerase II. H2BK120Ub also acts as a regulator of mRNA splicing: deubiquitination by USP49 is required for efficient cotranscriptional splicing of a large set of exons. Phosphorylated on Ser-15 (H2BS14ph) by STK4/MST1 during apoptosis; which facilitates apoptotic chromatin condensation. Also phosphorylated on Ser-15 in response to DNA double strand breaks (DSBs), and in correlation with somatic hypermutation and immunoglobulin class-switch recombination. Phosphorylation at Ser-37 (H2BS36ph) by AMPK in response to stress promotes transcription. Post-translationally, glcNAcylation at Ser-113 promotes monoubiquitination of Lys-121. It fluctuates in response to extracellular glucose, and associates with transcribed genes. In terms of processing, ADP-ribosylated by PARP1 or PARP2 on Ser-7 (H2BS6ADPr) in response to DNA damage. H2BS6ADPr promotes recruitment of CHD1L. Mono-ADP-ribosylated on Glu-3 (H2BE2ADPr) by PARP3 in response to single-strand breaks. Poly ADP-ribosylation on Glu-36 (H2BE35ADPr) by PARP1 regulates adipogenesis: it inhibits phosphorylation at Ser-37 (H2BS36ph), thereby blocking expression of pro-adipogenetic genes. Crotonylation (Kcr) is specifically present in male germ cells and marks testis-specific genes in post-meiotic cells, including X-linked genes that escape sex chromosome inactivation in haploid cells. Crotonylation marks active promoters and enhancers and confers resistance to transcriptional repressors. It is also associated with post-meiotically activated genes on autosomes. Post-translationally, lactylated in macrophages by EP300/P300 by using lactoyl-CoA directly derived from endogenous or exogenous lactate, leading to stimulates gene transcription.

Its subcellular location is the nucleus. It localises to the chromosome. Core component of nucleosome. Nucleosomes wrap and compact DNA into chromatin, limiting DNA accessibility to the cellular machineries which require DNA as a template. Histones thereby play a central role in transcription regulation, DNA repair, DNA replication and chromosomal stability. DNA accessibility is regulated via a complex set of post-translational modifications of histones, also called histone code, and nucleosome remodeling. This chain is Histone H2B type 1-K, found in Macaca fascicularis (Crab-eating macaque).